Reading from the N-terminus, the 714-residue chain is Structure-specific endonuclease subunit SLX4 1 (714 aa).

Basic and acidic residues-rich tracts occupy residues 1–14 and 24–34; these read MSPEGEESHAEDNL and IHEETLAEESH. 2 disordered regions span residues 1–116 and 337–369; these read MSPE…QGSI and DSSGPVNDKQPSVASETVESDSTPIVSPVKTPQ. The segment covering 36–46 has biased composition (low complexity); that stretch reads QSIQRSISRLS. Over residues 79–92 the composition is skewed to basic residues; the sequence is KTKKRKLKVSKPRK.

Belongs to the SLX4 family. As to quaternary structure, forms a heterodimer with SLX1. In terms of processing, phosphorylated in response to DNA damage.

The protein resides in the nucleus. Regulatory subunit of the SLX1-SLX4 structure-specific endonuclease that resolves DNA secondary structures generated during DNA repair and recombination. Has endonuclease activity towards branched DNA substrates, introducing single-strand cuts in duplex DNA close to junctions with ss-DNA. The sequence is that of Structure-specific endonuclease subunit SLX4 1 from Candida tropicalis (strain ATCC MYA-3404 / T1) (Yeast).